Reading from the N-terminus, the 551-residue chain is Chaperonin GroEL (551 aa).

ATP contacts are provided by residues 29 to 32 (TMGP), K50, 86 to 90 (DGTTT), G414, 478 to 480 (NAA), and D494.

It belongs to the chaperonin (HSP60) family. In terms of assembly, forms a cylinder of 14 subunits composed of two heptameric rings stacked back-to-back. Interacts with the co-chaperonin GroES.

The protein localises to the cytoplasm. The enzyme catalyses ATP + H2O + a folded polypeptide = ADP + phosphate + an unfolded polypeptide.. In terms of biological role, together with its co-chaperonin GroES, plays an essential role in assisting protein folding. The GroEL-GroES system forms a nano-cage that allows encapsulation of the non-native substrate proteins and provides a physical environment optimized to promote and accelerate protein folding. The protein is Chaperonin GroEL of Legionella jeonii.